The chain runs to 151 residues: MKVRIAVVGKLDGFIKEGIKHYEKFLRRFCKLEVLEIKRVHRGSIEEIVRKETEDLANRILLGSFVMVMDRRGEEVSSEEFADFLKDLEMKGKDITILIGGPHGLNEEIFAKAHRVFSLSKMTFTHGMTVLIVLEQIFRAFKIIHGENYHY.

Residues glycine 100 and 119–124 (LSKMTF) each bind S-adenosyl-L-methionine.

It belongs to the RNA methyltransferase RlmH family. Homodimer.

It localises to the cytoplasm. The catalysed reaction is pseudouridine(1915) in 23S rRNA + S-adenosyl-L-methionine = N(3)-methylpseudouridine(1915) in 23S rRNA + S-adenosyl-L-homocysteine + H(+). Specifically methylates the pseudouridine at position 1915 (m3Psi1915) in 23S rRNA. The polypeptide is Ribosomal RNA large subunit methyltransferase H (Thermotoga sp. (strain RQ2)).